We begin with the raw amino-acid sequence, 434 residues long: Histidinol dehydrogenase (434 aa).

Residues tyrosine 130, glutamine 188, and asparagine 211 each contribute to the NAD(+) site. Positions 237, 259, and 262 each coordinate substrate. Zn(2+)-binding residues include glutamine 259 and histidine 262. Active-site proton acceptor residues include glutamate 326 and histidine 327. Substrate-binding residues include histidine 327, aspartate 360, glutamate 414, and histidine 419. Aspartate 360 contacts Zn(2+). Histidine 419 is a Zn(2+) binding site.

Belongs to the histidinol dehydrogenase family. As to quaternary structure, homodimer. It depends on Zn(2+) as a cofactor. Requires Mn(2+) as cofactor.

The enzyme catalyses L-histidinol + 2 NAD(+) + H2O = L-histidine + 2 NADH + 3 H(+). It functions in the pathway amino-acid biosynthesis; L-histidine biosynthesis; L-histidine from 5-phospho-alpha-D-ribose 1-diphosphate: step 9/9. Activity is lost when the metal is removed through urea denaturation or chelation, and can be regained by addition of metal. Its function is as follows. Catalyzes the sequential NAD-dependent oxidations of L-histidinol to L-histidinaldehyde and then to L-histidine. This is Histidinol dehydrogenase (hisD) from Salmonella typhimurium (strain LT2 / SGSC1412 / ATCC 700720).